The sequence spans 177 residues: Ureidoglycolate lyase (177 aa).

The protein belongs to the ureidoglycolate lyase family. In terms of assembly, homodimer. It depends on Ni(2+) as a cofactor.

The catalysed reaction is (S)-ureidoglycolate = urea + glyoxylate. Its pathway is nitrogen metabolism; (S)-allantoin degradation. Its function is as follows. Catalyzes the catabolism of the allantoin degradation intermediate (S)-ureidoglycolate, generating urea and glyoxylate. Involved in the utilization of allantoin as nitrogen source. The sequence is that of Ureidoglycolate lyase from Burkholderia cepacia (Pseudomonas cepacia).